A 229-amino-acid polypeptide reads, in one-letter code: Cytidylate kinase (229 aa).

Residue 12 to 20 (GPSGAGKGT) participates in ATP binding.

Belongs to the cytidylate kinase family. Type 1 subfamily.

The protein localises to the cytoplasm. The enzyme catalyses CMP + ATP = CDP + ADP. It catalyses the reaction dCMP + ATP = dCDP + ADP. This is Cytidylate kinase from Shewanella frigidimarina (strain NCIMB 400).